The following is a 295-amino-acid chain: Fatty acid desaturase 4-like 1, chloroplastic (295 aa).

A chloroplast-targeting transit peptide spans 1–29 (MAVSFQTKNPLRPITNIPRSYGPTRVRVT). The next 3 membrane-spanning stretches (helical) occupy residues 72–92 (WVAAGSTTIFASFAKSIIGGF), 102–122 (LACYAGYVFADLGSGVYHWAI), and 175–195 (LAINNPLFHSFVSTFAFCILL).

The protein belongs to the fatty acid desaturase CarF family.

The protein resides in the plastid. It is found in the chloroplast membrane. Its pathway is lipid metabolism; fatty acid metabolism. Functionally, fatty acid desaturase involved in the production of chloroplast-specific phosphatidylglycerol molecular species. Catalyzes the formation of a trans double bond introduced close to the carboxyl group of palmitic acid, which is specifically esterified to the sn-2 glyceryl carbon of phosphatidylglycerol. This Arabidopsis thaliana (Mouse-ear cress) protein is Fatty acid desaturase 4-like 1, chloroplastic (FAD4L1).